The primary structure comprises 23 residues: Malate dehydrogenase (23 aa).

Asn7 contacts NAD(+). Arg23 is a substrate binding site.

It belongs to the LDH/MDH superfamily. MDH type 1 family. As to quaternary structure, homodimer.

The catalysed reaction is (S)-malate + NAD(+) = oxaloacetate + NADH + H(+). This Pseudotsuga menziesii (Douglas-fir) protein is Malate dehydrogenase.